The sequence spans 312 residues: Malate dehydrogenase (312 aa).

NAD(+)-binding positions include Gly-12–Gly-17 and Asp-36. Substrate-binding residues include Arg-87 and Arg-93. NAD(+) contacts are provided by residues Asn-100 and Leu-123–Asn-125. A substrate-binding site is contributed by Asn-125. Ser-149 bears the Phosphoserine mark. Residue Arg-156 participates in substrate binding. Catalysis depends on His-180, which acts as the Proton acceptor.

Belongs to the LDH/MDH superfamily. MDH type 3 family.

The catalysed reaction is (S)-malate + NAD(+) = oxaloacetate + NADH + H(+). Catalyzes the reversible oxidation of malate to oxaloacetate. The polypeptide is Malate dehydrogenase (Anoxybacillus flavithermus (strain DSM 21510 / WK1)).